Consider the following 640-residue polypeptide: 1-deoxy-D-xylulose-5-phosphate synthase (640 aa).

Residues His-79 and 120-122 (GHS) contribute to the thiamine diphosphate site. Asp-151 contacts Mg(2+). Residues 152 to 153 (GS), Asn-180, Tyr-290, and Glu-372 contribute to the thiamine diphosphate site. Asn-180 contributes to the Mg(2+) binding site.

It belongs to the transketolase family. DXPS subfamily. As to quaternary structure, homodimer. It depends on Mg(2+) as a cofactor. Requires thiamine diphosphate as cofactor.

It carries out the reaction D-glyceraldehyde 3-phosphate + pyruvate + H(+) = 1-deoxy-D-xylulose 5-phosphate + CO2. The protein operates within metabolic intermediate biosynthesis; 1-deoxy-D-xylulose 5-phosphate biosynthesis; 1-deoxy-D-xylulose 5-phosphate from D-glyceraldehyde 3-phosphate and pyruvate: step 1/1. In terms of biological role, catalyzes the acyloin condensation reaction between C atoms 2 and 3 of pyruvate and glyceraldehyde 3-phosphate to yield 1-deoxy-D-xylulose-5-phosphate (DXP). The protein is 1-deoxy-D-xylulose-5-phosphate synthase of Rhodopseudomonas palustris (strain BisA53).